The primary structure comprises 59 residues: Pycsar effector protein MePycTM (59 aa).

The chain crosses the membrane as a helical span at residues 36–56 (VAVAIYLLGAAMLSSGAAVLA).

The protein resides in the cell membrane. Its function is as follows. Pycsar (pyrimidine cyclase system for antiphage resistance) provides immunity against bacteriophage. The pyrimidine cyclase (PycC) synthesizes cyclic nucleotides in response to infection; these serve as specific second messenger signals. The signals activate the adjacent effector, leading to bacterial cell death and abortive phage infection. A clade D Pycsar system. Functionally, the effector gene of a two-gene Pycsar system. Expression of this and adjacent uridylate cyclase MePycC (AC A0A1C5G2V9) probably confers resistance to bacteriophage. The genes are probably only expressed in response to bacteriophage infection. Probably only responds to cUMP (produced by its cognate NTP cyclase), acts by impairing membrane integrity. This is Pycsar effector protein MePycTM from Micromonospora echinofusca.